The sequence spans 216 residues: 3-isopropylmalate dehydratase small subunit (216 aa).

It belongs to the LeuD family. LeuD type 1 subfamily. As to quaternary structure, heterodimer of LeuC and LeuD.

It carries out the reaction (2R,3S)-3-isopropylmalate = (2S)-2-isopropylmalate. The protein operates within amino-acid biosynthesis; L-leucine biosynthesis; L-leucine from 3-methyl-2-oxobutanoate: step 2/4. Its function is as follows. Catalyzes the isomerization between 2-isopropylmalate and 3-isopropylmalate, via the formation of 2-isopropylmaleate. The polypeptide is 3-isopropylmalate dehydratase small subunit (Polaromonas naphthalenivorans (strain CJ2)).